The following is a 351-amino-acid chain: Prostaglandin reductase 2 (351 aa).

99–100 (FY) is a substrate binding site. NADP(+) is bound by residues 165–168 (GACG), Lys-192, Tyr-208, Asn-231, 253–259 (CGQISQY), 287–289 (FLV), and Asn-337. 288 to 290 (LVL) contributes to the substrate binding site.

This sequence belongs to the NADP-dependent oxidoreductase L4BD family. Monomer. In terms of tissue distribution, widely expressed.

It localises to the cytoplasm. It catalyses the reaction 13,14-dihydro-15-oxo-prostaglandin E2 + NAD(+) = 15-oxoprostaglandin E2 + NADH + H(+). The enzyme catalyses 13,14-dihydro-15-oxo-prostaglandin E2 + NADP(+) = 15-oxoprostaglandin E2 + NADPH + H(+). The catalysed reaction is 13,14-dihydro-15-oxo-PGF2alpha + NADP(+) = 15-oxoprostaglandin F2alpha + NADPH + H(+). It carries out the reaction 13,14-dihydro-15-oxo-prostaglandin E1 + NADP(+) = 15-oxoprostaglandin E1 + NADPH + H(+). It catalyses the reaction 13,14-dihydro-15-oxo-prostaglandin F1alpha + NADP(+) = 15-oxoprostaglandin F1alpha + NADPH + H(+). Its function is as follows. Functions as 15-oxo-prostaglandin 13-reductase and acts on 15-keto-PGE1, 15-keto-PGE2, 15-keto-PGE1-alpha and 15-keto-PGE2-alpha with highest activity towards 15-keto-PGE2. Overexpression represses transcriptional activity of PPARG and inhibits adipocyte differentiation. The chain is Prostaglandin reductase 2 from Homo sapiens (Human).